The sequence spans 481 residues: Probable squalene synthase (481 aa).

Transmembrane regions (helical) follow at residues 294–314 and 416–436; these read SVFNFVAIPQAMAIATLELVF and FLVLSMIGVLFVMGGLMIGAA.

Belongs to the phytoene/squalene synthase family. Mg(2+) is required as a cofactor.

Its subcellular location is the endoplasmic reticulum membrane. The catalysed reaction is 2 (2E,6E)-farnesyl diphosphate + NADPH + H(+) = squalene + 2 diphosphate + NADP(+). It carries out the reaction 2 (2E,6E)-farnesyl diphosphate + NADH + H(+) = squalene + 2 diphosphate + NAD(+). It participates in terpene metabolism; lanosterol biosynthesis; lanosterol from farnesyl diphosphate: step 1/3. Functionally, catalyzes the condensation of 2 two farnesyl pyrophosphate moieties to form squalene. It is the first committed enzyme of the sterol biosynthesis pathway. Required for the biosynthesis of ergosterol. The protein is Probable squalene synthase (erg-6) of Neurospora crassa (strain ATCC 24698 / 74-OR23-1A / CBS 708.71 / DSM 1257 / FGSC 987).